Reading from the N-terminus, the 218-residue chain is Thiamine-phosphate synthase (218 aa).

Residues 45–49 (QYREK) and asparagine 77 contribute to the 4-amino-2-methyl-5-(diphosphooxymethyl)pyrimidine site. 2 residues coordinate Mg(2+): aspartate 78 and aspartate 97. Serine 116 contacts 4-amino-2-methyl-5-(diphosphooxymethyl)pyrimidine. A 2-[(2R,5Z)-2-carboxy-4-methylthiazol-5(2H)-ylidene]ethyl phosphate-binding site is contributed by 142–144 (TKT). Residue lysine 145 coordinates 4-amino-2-methyl-5-(diphosphooxymethyl)pyrimidine. 2-[(2R,5Z)-2-carboxy-4-methylthiazol-5(2H)-ylidene]ethyl phosphate-binding positions include glycine 173 and 193–194 (VT).

The protein belongs to the thiamine-phosphate synthase family. Mg(2+) is required as a cofactor.

The catalysed reaction is 2-[(2R,5Z)-2-carboxy-4-methylthiazol-5(2H)-ylidene]ethyl phosphate + 4-amino-2-methyl-5-(diphosphooxymethyl)pyrimidine + 2 H(+) = thiamine phosphate + CO2 + diphosphate. The enzyme catalyses 2-(2-carboxy-4-methylthiazol-5-yl)ethyl phosphate + 4-amino-2-methyl-5-(diphosphooxymethyl)pyrimidine + 2 H(+) = thiamine phosphate + CO2 + diphosphate. It catalyses the reaction 4-methyl-5-(2-phosphooxyethyl)-thiazole + 4-amino-2-methyl-5-(diphosphooxymethyl)pyrimidine + H(+) = thiamine phosphate + diphosphate. It participates in cofactor biosynthesis; thiamine diphosphate biosynthesis; thiamine phosphate from 4-amino-2-methyl-5-diphosphomethylpyrimidine and 4-methyl-5-(2-phosphoethyl)-thiazole: step 1/1. In terms of biological role, condenses 4-methyl-5-(beta-hydroxyethyl)thiazole monophosphate (THZ-P) and 2-methyl-4-amino-5-hydroxymethyl pyrimidine pyrophosphate (HMP-PP) to form thiamine monophosphate (TMP). This chain is Thiamine-phosphate synthase, found in Pelotomaculum thermopropionicum (strain DSM 13744 / JCM 10971 / SI).